The sequence spans 140 residues: Neurotrophin-7 (140 aa).

Positions 1 to 7 (PGPRVRR) are excised as a propeptide. 3 disulfides stabilise this stretch: Cys-21-Cys-101, Cys-64-Cys-129, and Cys-89-Cys-131.

This sequence belongs to the NGF-beta family.

It is found in the secreted. The protein is Neurotrophin-7 (ntf7) of Cyprinus carpio (Common carp).